The sequence spans 378 residues: Putative glutamate--cysteine ligase 2 (378 aa).

Belongs to the glutamate--cysteine ligase type 2 family. YbdK subfamily.

The enzyme catalyses L-cysteine + L-glutamate + ATP = gamma-L-glutamyl-L-cysteine + ADP + phosphate + H(+). Functionally, ATP-dependent carboxylate-amine ligase which exhibits weak glutamate--cysteine ligase activity. The sequence is that of Putative glutamate--cysteine ligase 2 from Ectopseudomonas mendocina (strain ymp) (Pseudomonas mendocina).